The following is a 431-amino-acid chain: Histidine--tRNA ligase (431 aa).

Belongs to the class-II aminoacyl-tRNA synthetase family. Homodimer.

It localises to the cytoplasm. The catalysed reaction is tRNA(His) + L-histidine + ATP = L-histidyl-tRNA(His) + AMP + diphosphate + H(+). The chain is Histidine--tRNA ligase (hisS) from Leifsonia xyli subsp. xyli (strain CTCB07).